The primary structure comprises 170 residues: Small ribosomal subunit protein bS16 (170 aa).

The tract at residues Glu-114 to Ser-170 is disordered. The span at Pro-142–Ser-170 shows a compositional bias: low complexity.

The protein belongs to the bacterial ribosomal protein bS16 family.

This is Small ribosomal subunit protein bS16 from Mycobacterium avium (strain 104).